Consider the following 460-residue polypeptide: UDP-N-acetylmuramoylalanine--D-glutamate ligase (460 aa).

Residue 120-126 (GSNGKTT) coordinates ATP.

This sequence belongs to the MurCDEF family.

The protein resides in the cytoplasm. It catalyses the reaction UDP-N-acetyl-alpha-D-muramoyl-L-alanine + D-glutamate + ATP = UDP-N-acetyl-alpha-D-muramoyl-L-alanyl-D-glutamate + ADP + phosphate + H(+). Its pathway is cell wall biogenesis; peptidoglycan biosynthesis. In terms of biological role, cell wall formation. Catalyzes the addition of glutamate to the nucleotide precursor UDP-N-acetylmuramoyl-L-alanine (UMA). The sequence is that of UDP-N-acetylmuramoylalanine--D-glutamate ligase from Lactobacillus johnsonii (strain CNCM I-12250 / La1 / NCC 533).